The following is a 161-amino-acid chain: RuBisCO chaperone RbcX (161 aa).

Disordered regions lie at residues 1–20 (MQFMGTASRMASTQRAKPME) and 130–161 (LGAEPSLPETEVSDRPSDSATPDDASNASHAD). The segment covering 147-161 (DSATPDDASNASHAD) has biased composition (polar residues).

This sequence belongs to the RbcX family. As to quaternary structure, homodimer. Interacts with the exposed C-terminal peptide of endogenous RbcL ('Lys-460-Asp-470') via its central cleft, as well as C-terminal peptides from other cyanobacterial RbcL. Contacts a second RbcL monomer via its peripheral polar surface.

The protein localises to the carboxysome. Its subcellular location is the cytoplasm. In terms of biological role, an RbcL-specific chaperone. The central cleft of the RbcX homodimer (RbcX2) binds the C-terminus of an RbcL monomer, stabilizing the C-terminus and probably preventing its reassociation with chaperonin GroEL-ES. At the same time the peripheral region of RbcX2 binds a second RbcL monomer, bridging the RbcL homodimers in the correct orientation. The RbcX2(2)-bound RbcL dimers then assemble into the RbcL8 core (RbcL8-(RbcX2)8). RbcS binding triggers the release of RbcX2. This chain is RuBisCO chaperone RbcX, found in Synechococcus sp. (strain ATCC 27144 / PCC 6301 / SAUG 1402/1) (Anacystis nidulans).